We begin with the raw amino-acid sequence, 479 residues long: Wax ester synthase/diacylglycerol acyltransferase 2 (479 aa).

At 1–182 the chain is on the cytoplasmic side; sequence MAIERQVTEA…VAPKKNKAKN (182 aa). The active-site Proton acceptor is the His144. Residues 183-199 traverse the membrane as a helical segment; that stretch reads VCFSLVAWLWFIVRLMF. At 200 to 479 the chain is on the lumenal side; sequence HTCVEVIKSI…PKKVFHASKV (280 aa). Asn253 carries an N-linked (GlcNAc...) asparagine glycan.

In the N-terminal section; belongs to the long-chain O-acyltransferase family. In terms of tissue distribution, mostly expressed in flowers and siliques and barely in roots and stems.

Its subcellular location is the cell membrane. The protein resides in the endoplasmic reticulum membrane. The catalysed reaction is an acyl-CoA + a 1,2-diacyl-sn-glycerol = a triacyl-sn-glycerol + CoA. It catalyses the reaction a long chain fatty alcohol + a fatty acyl-CoA = a wax ester + CoA. The protein operates within glycerolipid metabolism; triacylglycerol biosynthesis. It participates in lipid metabolism. Bifunctional wax ester synthase/diacylglycerol acyltransferase. Involved in cuticular wax biosynthesis. This Arabidopsis thaliana (Mouse-ear cress) protein is Wax ester synthase/diacylglycerol acyltransferase 2.